Consider the following 567-residue polypeptide: DNA ligase B (567 aa).

K132 acts as the N6-AMP-lysine intermediate in catalysis.

It belongs to the NAD-dependent DNA ligase family. LigB subfamily.

The enzyme catalyses NAD(+) + (deoxyribonucleotide)n-3'-hydroxyl + 5'-phospho-(deoxyribonucleotide)m = (deoxyribonucleotide)n+m + AMP + beta-nicotinamide D-nucleotide.. In terms of biological role, catalyzes the formation of phosphodiester linkages between 5'-phosphoryl and 3'-hydroxyl groups in double-stranded DNA using NAD as a coenzyme and as the energy source for the reaction. In Yersinia pseudotuberculosis serotype IB (strain PB1/+), this protein is DNA ligase B.